Reading from the N-terminus, the 341-residue chain is Ferrochelatase (341 aa).

The Fe cation site is built by His-189 and Glu-293.

The protein belongs to the ferrochelatase family.

It localises to the cytoplasm. It carries out the reaction heme b + 2 H(+) = protoporphyrin IX + Fe(2+). It functions in the pathway porphyrin-containing compound metabolism; protoheme biosynthesis; protoheme from protoporphyrin-IX: step 1/1. Its function is as follows. Catalyzes the ferrous insertion into protoporphyrin IX. This is Ferrochelatase from Stutzerimonas stutzeri (strain A1501) (Pseudomonas stutzeri).